The chain runs to 289 residues: Pantothenate synthetase (289 aa).

Residue methionine 30–histidine 37 coordinates ATP. The active-site Proton donor is histidine 37. Residue glutamine 61 participates in (R)-pantoate binding. Glutamine 61 contributes to the beta-alanine binding site. Glycine 149 to aspartate 152 contacts ATP. Glutamine 155 lines the (R)-pantoate pocket. Position 186-189 (methionine 186–arginine 189) interacts with ATP.

Belongs to the pantothenate synthetase family. Homodimer.

It localises to the cytoplasm. The catalysed reaction is (R)-pantoate + beta-alanine + ATP = (R)-pantothenate + AMP + diphosphate + H(+). It functions in the pathway cofactor biosynthesis; (R)-pantothenate biosynthesis; (R)-pantothenate from (R)-pantoate and beta-alanine: step 1/1. Its function is as follows. Catalyzes the condensation of pantoate with beta-alanine in an ATP-dependent reaction via a pantoyl-adenylate intermediate. The chain is Pantothenate synthetase from Psychromonas ingrahamii (strain DSM 17664 / CCUG 51855 / 37).